Consider the following 106-residue polypeptide: Colipase A (106 aa).

The N-terminal stretch at 1–11 (LLLVALAVAYA) is a signal peptide. The propeptide at 12–16 (VPDPR) is enterostatin, activation peptide. Cystine bridges form between C28–C39, C34–C50, C38–C72, C60–C80, and C74–C98. W63 contacts taurodeoxycholate.

Belongs to the colipase family. Forms a 1:1 stoichiometric complex with pancreatic lipase. Expressed by the pancreas.

It is found in the secreted. In terms of biological role, colipase is a cofactor of pancreatic lipase. It allows the lipase to anchor itself to the lipid-water interface. Without colipase the enzyme is washed off by bile salts, which have an inhibitory effect on the lipase. Functionally, enterostatin has a biological activity as a satiety signal. The chain is Colipase A (CLPS1) from Equus caballus (Horse).